A 188-amino-acid polypeptide reads, in one-letter code: GMP synthase [glutamine-hydrolyzing] subunit A (188 aa).

Residues 2 to 188 form the Glutamine amidotransferase type-1 domain; that stretch reads KIAVIYFGGQ…FKNFIEACKK (187 aa). Catalysis depends on Cys-79, which acts as the Nucleophile. Catalysis depends on residues His-166 and Glu-168.

In terms of assembly, heterodimer composed of a glutamine amidotransferase subunit (A) and a GMP-binding subunit (B).

The catalysed reaction is XMP + L-glutamine + ATP + H2O = GMP + L-glutamate + AMP + diphosphate + 2 H(+). Its pathway is purine metabolism; GMP biosynthesis; GMP from XMP (L-Gln route): step 1/1. In terms of biological role, catalyzes the synthesis of GMP from XMP. This is GMP synthase [glutamine-hydrolyzing] subunit A from Sulfurisphaera tokodaii (strain DSM 16993 / JCM 10545 / NBRC 100140 / 7) (Sulfolobus tokodaii).